Reading from the N-terminus, the 406-residue chain is uncharacterized protein (406 aa).

Helical transmembrane passes span 7–27, 31–51, 65–85, 92–112, and 191–211; these read LCTN…YYLF, YFNI…YGSV, LIFI…SEII, IFYF…SFIL, and ISLI…SSFF. Positions 259 to 331 are disordered; sequence TLNVPISTNN…TGTNNNVVDN (73 aa). The segment covering 262–291 has biased composition (polar residues); that stretch reads VPISTNNTDNLNSVKTNQQFNTPVAKSNTK. The segment covering 292 to 303 has biased composition (basic residues); that stretch reads SNRRKKTGKKIR. Positions 306-318 are enriched in low complexity; the sequence is NQTTSSNSSNNQS. The span at 319–330 shows a compositional bias: polar residues; the sequence is PESTGTNNNVVD.

It localises to the membrane. This is an uncharacterized protein from Acanthamoeba polyphaga (Amoeba).